A 370-amino-acid polypeptide reads, in one-letter code: Trans-enoyl reductase xenG (370 aa).

Residues 1–32 form a disordered region; sequence MASTGLPQLPPSQKAVIQSEKTPGAFEVSENR. Residues 54 to 57, 177 to 180, 200 to 203, Tyr218, 265 to 266, and 356 to 357 each bind NADP(+); these read CDWK, STAS, SPKN, FE, and VS.

It belongs to the zinc-containing alcohol dehydrogenase family. Monomer.

It functions in the pathway mycotoxin biosynthesis. Functionally, trans-enoyl reductase; part of the gene cluster that mediates the biosynthesis of xenoacremones such as xenoacremone A, a compound that shows inhibitory activity toward the PI3K/AKT signaling pathway and which has the ability to induce apoptosis of A549 lung cancer cells. Within the pathway, cooperation of the hybrid PKS-NRPS xenE and the trans-acting enoyl reductase xenG is responsible for the formation of the reduced tyrosine-nonaketide derivative. The alpha/beta hydrolase xenA then accelerates intramolecular nucleophilic attack to give a pyrrolidone derivative. Subsequently, three enzymes, xenF, xenD, and xenC, coordinately participate in the conversion to xenoacremone B. XenF catalyzes sigmatropic rearrangement to form an A-ring, which leads to an unusual intermediate with a hexane ring, which is required for the formation of the tricarbocyclic product. Epoxidation catalyzed by xenD and the formation of the paracyclophane ether catalyzed by xenC initiate a spontaneous intramolecular Diels-Alder (IMDA) reaction to yield xenoacremone B. Spontaneous hydration of xenoacremone B leads to the formation of xenoacremone A, which undergoes subsequent methylation to afford xenoacremone C. In Xenoacremonium sinensis (Endophyte fungus), this protein is Trans-enoyl reductase xenG.